Here is a 488-residue protein sequence, read N- to C-terminus: Glutamyl-tRNA(Gln) amidotransferase subunit A (488 aa).

Catalysis depends on charge relay system residues Lys77 and Ser152. The active-site Acyl-ester intermediate is Ser176.

Belongs to the amidase family. GatA subfamily. As to quaternary structure, heterotrimer of A, B and C subunits.

The catalysed reaction is L-glutamyl-tRNA(Gln) + L-glutamine + ATP + H2O = L-glutaminyl-tRNA(Gln) + L-glutamate + ADP + phosphate + H(+). Functionally, allows the formation of correctly charged Gln-tRNA(Gln) through the transamidation of misacylated Glu-tRNA(Gln) in organisms which lack glutaminyl-tRNA synthetase. The reaction takes place in the presence of glutamine and ATP through an activated gamma-phospho-Glu-tRNA(Gln). This Streptococcus pneumoniae (strain ATCC 700669 / Spain 23F-1) protein is Glutamyl-tRNA(Gln) amidotransferase subunit A.